The primary structure comprises 154 residues: Large ribosomal subunit protein uL24 (154 aa).

Residues 97–154 are disordered; the sequence is EIAARKNLPPPEVPEETSNDTKESDENVTGADKEETNEIKEEDLNDNEDKNNDGSQEA. Residues 115–135 show a composition bias toward basic and acidic residues; sequence NDTKESDENVTGADKEETNEI.

This sequence belongs to the universal ribosomal protein uL24 family. Part of the 50S ribosomal subunit.

Functionally, one of two assembly initiator proteins, it binds directly to the 5'-end of the 23S rRNA, where it nucleates assembly of the 50S subunit. Its function is as follows. Located at the polypeptide exit tunnel on the outside of the subunit. This chain is Large ribosomal subunit protein uL24, found in Picrophilus torridus (strain ATCC 700027 / DSM 9790 / JCM 10055 / NBRC 100828 / KAW 2/3).